We begin with the raw amino-acid sequence, 122 residues long: Large ribosomal subunit protein uL14 (122 aa).

The protein belongs to the universal ribosomal protein uL14 family. Part of the 50S ribosomal subunit. Forms a cluster with proteins L3 and L19. In the 70S ribosome, L14 and L19 interact and together make contacts with the 16S rRNA in bridges B5 and B8.

In terms of biological role, binds to 23S rRNA. Forms part of two intersubunit bridges in the 70S ribosome. The sequence is that of Large ribosomal subunit protein uL14 from Hyphomonas neptunium (strain ATCC 15444).